The primary structure comprises 273 residues: Large ribosomal subunit protein uL2 (273 aa).

The segment at 223–273 is disordered; that stretch reads VVMNPVDHPMGGGEGRSSGGRHPCTPWGVPTKGHKTRSNKSTDKYIVKRRG. Positions 262–273 are enriched in basic and acidic residues; that stretch reads KSTDKYIVKRRG.

It belongs to the universal ribosomal protein uL2 family. As to quaternary structure, part of the 50S ribosomal subunit. Forms a bridge to the 30S subunit in the 70S ribosome.

One of the primary rRNA binding proteins. Required for association of the 30S and 50S subunits to form the 70S ribosome, for tRNA binding and peptide bond formation. It has been suggested to have peptidyltransferase activity; this is somewhat controversial. Makes several contacts with the 16S rRNA in the 70S ribosome. This chain is Large ribosomal subunit protein uL2, found in Syntrophus aciditrophicus (strain SB).